We begin with the raw amino-acid sequence, 52 residues long: Large ribosomal subunit protein eL39 (52 aa).

Belongs to the eukaryotic ribosomal protein eL39 family.

In Caldivirga maquilingensis (strain ATCC 700844 / DSM 13496 / JCM 10307 / IC-167), this protein is Large ribosomal subunit protein eL39.